Reading from the N-terminus, the 207-residue chain is Urease accessory protein UreG (207 aa).

16-23 (GPVGSGKT) is a GTP binding site.

The protein belongs to the SIMIBI class G3E GTPase family. UreG subfamily. Homodimer. UreD, UreF and UreG form a complex that acts as a GTP-hydrolysis-dependent molecular chaperone, activating the urease apoprotein by helping to assemble the nickel containing metallocenter of UreC. The UreE protein probably delivers the nickel.

It localises to the cytoplasm. Its function is as follows. Facilitates the functional incorporation of the urease nickel metallocenter. This process requires GTP hydrolysis, probably effectuated by UreG. The polypeptide is Urease accessory protein UreG (Cupriavidus metallidurans (strain ATCC 43123 / DSM 2839 / NBRC 102507 / CH34) (Ralstonia metallidurans)).